A 162-amino-acid chain; its full sequence is uncharacterized protein (162 aa).

4 consecutive transmembrane segments (helical) span residues Ile-10–Leu-30, Ile-50–Asn-70, Ile-96–Leu-116, and Phe-125–Phe-145.

The protein resides in the cell membrane. This is an uncharacterized protein from Methanocaldococcus jannaschii (strain ATCC 43067 / DSM 2661 / JAL-1 / JCM 10045 / NBRC 100440) (Methanococcus jannaschii).